A 657-amino-acid chain; its full sequence is Methyl-accepting chemotaxis protein CtpL (657 aa).

The Cytoplasmic portion of the chain corresponds to 1 to 5; the sequence is MRLKQ. Residues 6–26 traverse the membrane as a helical segment; the sequence is LTNLNTLLLLTVCLALGITLW. Residues 27 to 305 lie on the Periplasmic side of the membrane; it reads WSQRAMERPF…ERQRLQGQVR (279 aa). A helical membrane pass occupies residues 306 to 326; sequence LIQGGMIALILLIALAIDSLQ. The HAMP domain maps to 327 to 380; the sequence is RRLARVLGQLVPALSAWADGDFSRPISLRTRTEDLRNLEDSLNRLRSFLAELVG. Over 327 to 657 the chain is Cytoplasmic; the sequence is RRLARVLGQL…LRTTVQAFRL (331 aa). A Methyl-accepting transducer domain is found at 385-621; that stretch reads RAEQVAGSSQ…EIRSHSERIH (237 aa).

It belongs to the methyl-accepting chemotaxis (MCP) protein family.

The protein localises to the cell inner membrane. Chemotactic-signal transducers respond to changes in the concentration of attractants and repellents in the environment, transduce a signal from the outside to the inside of the cell, and facilitate sensory adaptation through the variation of the level of methylation. Chemoreceptor for inorganic phosphate, which is required for taxis at low concentrations of phosphate. Is also responsible for the positive chemotaxis toward 4-chloroaniline (4CA) and catechol. Does not recognize inorganic phosphate directly, but via a complex between the periplasmic protein PstS and inorganic phosphate. The protein is Methyl-accepting chemotaxis protein CtpL of Pseudomonas aeruginosa (strain ATCC 15692 / DSM 22644 / CIP 104116 / JCM 14847 / LMG 12228 / 1C / PRS 101 / PAO1).